Consider the following 199-residue polypeptide: Peroxiredoxin-1 (199 aa).

Ser-2 carries the post-translational modification N-acetylserine. Residues 6 to 165 (AKIGHPAPNF…TLRLVQAFQF (160 aa)) form the Thioredoxin domain. Lys-7 carries the post-translational modification N6-acetyllysine; alternate. Lys-7 is covalently cross-linked (Glycyl lysine isopeptide (Lys-Gly) (interchain with G-Cter in SUMO2); alternate). 2 positions are modified to N6-acetyllysine: Lys-16 and Lys-27. Phosphoserine is present on Ser-32. Residue Lys-35 is modified to N6-acetyllysine; alternate. The residue at position 35 (Lys-35) is an N6-succinyllysine; alternate. Residue Cys-52 is the Cysteine sulfenic acid (-SOH) intermediate of the active site. Phosphothreonine is present on Thr-90. Lys-120 participates in a covalent cross-link: Glycyl lysine isopeptide (Lys-Gly) (interchain with G-Cter in SUMO2). Position 136 is an N6-acetyllysine (Lys-136). The tract at residues 176–199 (GWKPGSDTIKPDVQKSKEYFSKQK) is disordered. Over residues 184 to 199 (IKPDVQKSKEYFSKQK) the composition is skewed to basic and acidic residues. Residue Lys-185 forms a Glycyl lysine isopeptide (Lys-Gly) (interchain with G-Cter in SUMO1) linkage. Residue Lys-197 is modified to N6-acetyllysine.

Belongs to the peroxiredoxin family. AhpC/Prx1 subfamily. As to quaternary structure, homodimer; disulfide-linked, upon oxidation. 5 homodimers assemble to form a ring-like decamer. Interacts with GDPD5; forms a mixed-disulfide with GDPD5. Interacts with SESN1 and SESN2. Interacts with FAM107A. Phosphorylated on Thr-90 during the M-phase, which leads to a decrease in enzymatic activity. Post-translationally, acetylation increases reducing activity and resistance to superoxidation. Deacetylated by HDAC6 which decreases reducing activity. Detected in heart and skeletal muscle (at protein level).

Its subcellular location is the cytoplasm. It carries out the reaction a hydroperoxide + [thioredoxin]-dithiol = an alcohol + [thioredoxin]-disulfide + H2O. Its function is as follows. Thiol-specific peroxidase that catalyzes the reduction of hydrogen peroxide and organic hydroperoxides to water and alcohols, respectively. Plays a role in cell protection against oxidative stress by detoxifying peroxides and as sensor of hydrogen peroxide-mediated signaling events. Might participate in the signaling cascades of growth factors and tumor necrosis factor-alpha by regulating the intracellular concentrations of H(2)O(2). Reduces an intramolecular disulfide bond in GDPD5 that gates the ability to GDPD5 to drive postmitotic motor neuron differentiation. The sequence is that of Peroxiredoxin-1 (PRDX1) from Myotis lucifugus (Little brown bat).